We begin with the raw amino-acid sequence, 181 residues long: Peptidyl-tRNA hydrolase (181 aa).

Tyr-14 contributes to the tRNA binding site. His-19 serves as the catalytic Proton acceptor. TRNA is bound by residues Tyr-60, Asn-62, and Asn-108.

It belongs to the PTH family. Monomer.

Its subcellular location is the cytoplasm. It catalyses the reaction an N-acyl-L-alpha-aminoacyl-tRNA + H2O = an N-acyl-L-amino acid + a tRNA + H(+). Hydrolyzes ribosome-free peptidyl-tRNAs (with 1 or more amino acids incorporated), which drop off the ribosome during protein synthesis, or as a result of ribosome stalling. Its function is as follows. Catalyzes the release of premature peptidyl moieties from peptidyl-tRNA molecules trapped in stalled 50S ribosomal subunits, and thus maintains levels of free tRNAs and 50S ribosomes. The polypeptide is Peptidyl-tRNA hydrolase (Metamycoplasma arthritidis (strain 158L3-1) (Mycoplasma arthritidis)).